Consider the following 283-residue polypeptide: Tropomyosin (283 aa).

The stretch at 1-283 (MDAIKKKMQA…LDSAFVELIL (283 aa)) forms a coiled coil.

Belongs to the tropomyosin family. Homodimer.

Functionally, tropomyosin, in association with the troponin complex, plays a central role in the calcium dependent regulation of muscle contraction. The chain is Tropomyosin from Locusta migratoria (Migratory locust).